The sequence spans 281 residues: ATP synthase gamma chain (281 aa).

This sequence belongs to the ATPase gamma chain family. F-type ATPases have 2 components, CF(1) - the catalytic core - and CF(0) - the membrane proton channel. CF(1) has five subunits: alpha(3), beta(3), gamma(1), delta(1), epsilon(1). CF(0) has three main subunits: a, b and c.

The protein localises to the cell membrane. Produces ATP from ADP in the presence of a proton gradient across the membrane. The gamma chain is believed to be important in regulating ATPase activity and the flow of protons through the CF(0) complex. The protein is ATP synthase gamma chain of Desulfitobacterium hafniense (strain DSM 10664 / DCB-2).